We begin with the raw amino-acid sequence, 64 residues long: Large ribosomal subunit protein bL35 (64 aa).

Residues 1–29 (MPKMKTHSGAKKRFKLTGSGKLRRQQANR) are disordered.

Belongs to the bacterial ribosomal protein bL35 family.

The chain is Large ribosomal subunit protein bL35 from Pseudarthrobacter chlorophenolicus (strain ATCC 700700 / DSM 12829 / CIP 107037 / JCM 12360 / KCTC 9906 / NCIMB 13794 / A6) (Arthrobacter chlorophenolicus).